Consider the following 20-residue polypeptide: Peptide encoded by miPEP171b (20 aa).

In terms of tissue distribution, lateral root initiations.

Regulatory peptide encoded by the primary transcript (pri-miR171b) of the microRNA miR171b that enhances the accumulation of its corresponding mature miRNA. Acts probably as a transcriptional activator of its corresponding pri-miRNA. Has no effect on the accumulation of other miRNAs. Addition of synthetic miPEP171b increases the abundance of miR171b, with consequent reduction of lateral root formation. The chain is Peptide encoded by miPEP171b from Medicago truncatula (Barrel medic).